A 644-amino-acid polypeptide reads, in one-letter code: Kelch-like protein 34 (644 aa).

The BTB domain maps to 29 to 96 (CDVTLETEGS…IYTAWLSLSM (68 aa)). The 108-residue stretch at 131–238 (CCFAANVAAR…PADVLRRVYS (108 aa)) folds into the BACK domain. The interval 304–329 (AARGQVAAPEPEEEEEELEEEEEEEE) is disordered. Over residues 313–329 (EPEEEEEELEEEEEEEE) the composition is skewed to acidic residues. 6 Kelch repeats span residues 320-366 (ELEE…TAGN), 367-425 (FLFV…AVGE), 426-473 (RLLA…VGDR), 475-526 (VVYI…VLRG), 528-571 (VFAF…VVEE), and 573-623 (ALLL…VLQL).

This chain is Kelch-like protein 34 (KLHL34), found in Homo sapiens (Human).